Reading from the N-terminus, the 385-residue chain is Outer membrane porin protein BP0840 (385 aa).

Residues 1–20 (MKKTLLAAALLAGFAGAAQA) form the signal peptide.

To bacterial outer membrane proteins and porins. Homotrimer.

It localises to the cell outer membrane. Functionally, forms anion selective channels. The protein is Outer membrane porin protein BP0840 of Bordetella pertussis (strain Tohama I / ATCC BAA-589 / NCTC 13251).